Here is a 581-residue protein sequence, read N- to C-terminus: NADH-quinone oxidoreductase subunit C/D (581 aa).

The segment at 1–172 (MSGAELISDL…PPFVMTAARF (172 aa)) is NADH dehydrogenase I subunit C. Residues 196–581 (ELMILNYGPH…IDYVMSDVDR (386 aa)) are NADH dehydrogenase I subunit D.

This sequence in the N-terminal section; belongs to the complex I 30 kDa subunit family. The protein in the C-terminal section; belongs to the complex I 49 kDa subunit family. NDH-1 is composed of 13 different subunits. Subunits NuoB, CD, E, F, and G constitute the peripheral sector of the complex.

It localises to the cell inner membrane. It catalyses the reaction a quinone + NADH + 5 H(+)(in) = a quinol + NAD(+) + 4 H(+)(out). Functionally, NDH-1 shuttles electrons from NADH, via FMN and iron-sulfur (Fe-S) centers, to quinones in the respiratory chain. The immediate electron acceptor for the enzyme in this species is believed to be ubiquinone. Couples the redox reaction to proton translocation (for every two electrons transferred, four hydrogen ions are translocated across the cytoplasmic membrane), and thus conserves the redox energy in a proton gradient. This is NADH-quinone oxidoreductase subunit C/D from Rhodopseudomonas palustris (strain BisA53).